The following is a 341-amino-acid chain: S-adenosylmethionine:tRNA ribosyltransferase-isomerase (341 aa).

Belongs to the QueA family. In terms of assembly, monomer.

The protein localises to the cytoplasm. It carries out the reaction 7-aminomethyl-7-carbaguanosine(34) in tRNA + S-adenosyl-L-methionine = epoxyqueuosine(34) in tRNA + adenine + L-methionine + 2 H(+). It participates in tRNA modification; tRNA-queuosine biosynthesis. Functionally, transfers and isomerizes the ribose moiety from AdoMet to the 7-aminomethyl group of 7-deazaguanine (preQ1-tRNA) to give epoxyqueuosine (oQ-tRNA). The protein is S-adenosylmethionine:tRNA ribosyltransferase-isomerase of Chlorobium chlorochromatii (strain CaD3).